Reading from the N-terminus, the 96-residue chain is Ubiquitin-related modifier 1 (96 aa).

G96 is modified (1-thioglycine). G96 is covalently cross-linked (Glycyl lysine isopeptide (Gly-Lys) (interchain with K-? in acceptor proteins)).

It belongs to the URM1 family. Post-translationally, C-terminal thiocarboxylation occurs in 2 steps, it is first acyl-adenylated (-COAMP) via the hesA/moeB/thiF part of UBA4, then thiocarboxylated (-COSH) via the rhodanese domain of UBA4.

It is found in the cytoplasm. Its pathway is tRNA modification; 5-methoxycarbonylmethyl-2-thiouridine-tRNA biosynthesis. Functionally, acts as a sulfur carrier required for 2-thiolation of mcm(5)S(2)U at tRNA wobble positions of cytosolic tRNA(Lys), tRNA(Glu) and tRNA(Gln). Serves as sulfur donor in tRNA 2-thiolation reaction by being thiocarboxylated (-COSH) at its C-terminus by the MOCS3 homolog UBA4. The sulfur is then transferred to tRNA to form 2-thiolation of mcm(5)S(2)U. Prior mcm(5) tRNA modification by the elongator complex is required for 2-thiolation. Also acts as a ubiquitin-like protein (UBL) that is covalently conjugated via an isopeptide bond to lysine residues of target proteins such as AHP1. The thiocarboxylated form serves as substrate for conjugation and oxidative stress specifically induces the formation of UBL-protein conjugates. The chain is Ubiquitin-related modifier 1 from Encephalitozoon cuniculi (strain GB-M1) (Microsporidian parasite).